The primary structure comprises 37 residues: Beta-2-microglobulin (37 aa).

One can recognise an Ig-like C1-type domain in the interval 11-37 (GKEDVLICHVSNFHPPDITITLLKNGE).

Belongs to the beta-2-microglobulin family. In terms of assembly, heterodimer of an alpha chain and a beta chain. Beta-2-microglobulin is the beta-chain of major histocompatibility complex class I molecules.

It localises to the secreted. Component of the class I major histocompatibility complex (MHC). Involved in the presentation of peptide antigens to the immune system. The protein is Beta-2-microglobulin (b2m) of Oreochromis niloticus (Nile tilapia).